Consider the following 378-residue polypeptide: Stimulator of interferon genes protein (378 aa).

At 1 to 17 the chain is on the cytoplasmic side; sequence MPYSSLHPSIPQPRGLR. The interval 1 to 190 is mediates interaction with ZDHHC1 and ZDHHC11; sequence MPYSSLHPSI…AYNQRHKNVL (190 aa). A helical membrane pass occupies residues 18-34; that stretch reads AQVAALVLLGACLVALW. Topologically, residues 35–44 are lumenal; it reads GLGELPEYTL. Residues 45 to 69 traverse the membrane as a helical segment; the sequence is RWLVLHLASQQIGLLVKGLCSLAEE. Topologically, residues 70-91 are cytoplasmic; that stretch reads LCHVHSRYQSSYWRAARACLGC. 2 S-palmitoyl cysteine lipidation sites follow: Cys-88 and Cys-91. Residues 92-106 form a helical membrane-spanning segment; it reads PIRCGALLLLSCYFY. Residues 107 to 116 are Lumenal-facing; that stretch reads FSIRDKAGLP. Residues 117-134 form a helical membrane-spanning segment; that stretch reads LPWMLALLGLSQALNILL. Residues 135-378 lie on the Cytoplasmic side of the membrane; it reads GLQHLAPAEV…QPLPLRSDIF (244 aa). A Glycyl lysine isopeptide (Lys-Gly) (interchain with G-Cter in ubiquitin) cross-link involves residue Lys-150. The segment at 153 to 339 is cyclic dinucleotide-binding domain (CBD); sequence FNVAHGLAWS…LRHLRQEERE (187 aa). 2',3'-cGAMP-binding residues include Ser-162 and Tyr-167. Residues Ser-162 and Tyr-167 each contribute to the 3',3'-c-di-GMP site. Tyr-167 lines the 2',3'-cUAMP pocket. Lys-236 is covalently cross-linked (Glycyl lysine isopeptide (Lys-Gly) (interchain with G-Cter in ubiquitin)). 2',3'-cGAMP is bound by residues Arg-238 and Thr-263. Residues Arg-238 and Thr-263 each contribute to the 2',3'-cUAMP site. 3',3'-c-di-GMP-binding positions include 238-241 and Thr-263; that span reads RVYT. A C-terminal tail (CTT) region spans residues 339–378; it reads EVTMGSAETSVVPTSSTLSQEPELLISGMEQPLPLRSDIF. A Phosphoserine modification is found at Ser-354. Thr-355 bears the Phosphothreonine mark. A phosphoserine; by TBK1 mark is found at Ser-357 and Ser-365. A pLxIS motif motif is present at residues 362–365; sequence LLIS.

Belongs to the STING family. In terms of assembly, homodimer; forms a homodimer in absence of cyclic nucleotide (c-di-GMP or cGAMP); 'Lys-63'-linked ubiquitination at Lys-150 is required for homodimerization. Homotetramer; in presence of cyclic nucleotide (c-di-GMP or cGAMP), forms tetramers and higher-order oligomers through side-by-side packing. Interacts (when phosphorylated) with IRF3; following activation and phosphorylation on the pLxIS motif by TBK1, recruits IRF3. Interacts with DDX58/RIG-I, MAVS and SSR2. Interacts with RNF5 and TRIM56. Interacts with TBK1; when homodimer, leading to subsequent production of IFN-beta. Interacts with IFIT1 and IFIT2. Interacts with TRIM29; this interaction induces STING1 ubiquitination and subsequent degradation. Associates with the MHC-II complex. Interacts with STEEP1; interaction takes place upon cGAMP-activation and STING1 phosphorylation by MAP3K7/TAK1 and promotes STING1 translocation to COPII vesicles. Interacts with SEC24A, SEC24B and SEC24C; promoting translocation to COPII vesicles. Interacts (when ubiquitinated) with SQSTM1; leading to relocalization to autophagosomes. Interacts with SURF4. Interacts with HNRNPA2B1. Interacts with ZDHHC1; ZDHHC1 constitutively interacts with STING1 and in presence of DNA viruses activates it by promoting its cGAMP-induced oligomerization and the recruitment of downstream signaling components. Interacts with ZDHHC11; in presence of DNA viruses promotes the recruitment of IRF3 to STING1. Interacts with TOMM70. Interacts with TAB1; promoting recruitment of TAB1 to the endoplasmic reticulum membrane and subsequent activation of MAP3K7/TAK1. Interacts (via transmembrane domain) with TMEM203. Interacts with DDX41. (Microbial infection) Interacts with African swine fever virus/ASFV protein A528R; this interaction mediates STING1 degradation. As to quaternary structure, (Microbial infection) Interacts with African swine fever virus/ASFV minor capsid protein p17. In terms of assembly, (Microbial infection) Interacts with Pseudorabies virus protein UL13; this interaction mediates STING1 degradation in a RNF5-dependent manner. Phosphorylation by TBK1 leads to activation and production of IFN-beta. Following cyclic nucleotide (c-di-GMP or cGAMP)-binding, activation and translocation from the endoplasmic reticulum, STING1 is phosphorylated by TBK1 at Ser-365 in the pLxIS motif. The phosphorylated pLxIS motif constitutes an IRF3-binding motif, leading to recruitment of the transcription factor IRF3 to induce type-I interferons and other cytokines. Phosphorylated on tyrosine residues upon MHC-II aggregation. Dephosphorylation by PPP6C leads to inactivation and decreased production of IFN-beta. Phosphorylation at Ser-357 is also required to activate IRF3. Phosphorylation at Ser-354 by MAP3K7/TAK1 facilitates its interaction with STEEP1, promoting STING1 translocation to COPII vesicles. In terms of processing, ubiquitinated. Ubiquitinated via 'Lys-63'-linked ubiquitin chains in response to double-stranded DNA treatment, leading to relocalization to autophagosomes and subsequent degradation; this process is dependent on SQSTM1. 'Lys-63'-linked ubiquitination mediated by TRIM56 at Lys-150 promotes homodimerization and recruitment of the antiviral kinase TBK1 and subsequent production of IFN-beta. 'Lys-48'-linked polyubiquitination at Lys-150 occurring after viral infection is mediated by RNF5 and leads to proteasomal degradation. 'Lys-11'-linked polyubiquitination at Lys-150 by RNF26 leads to stabilize STING1: it protects STING1 from RNF5-mediated 'Lys-48'-linked polyubiquitination. 'Lys-33'-linked and 'Lys-48'-linked deubiquitinated by USP20; leading to its stabilization and promotion of innate antiviral response. 'Lys-48'-linked deubiquitinated by USP44; leading to its stabilization and promotion of innate antiviral response. Deubiquitinated by USP13; leading to inhibition of innate antiviral response. 'Lys-63'-linked deubiquitinated by USP49; leading to inhibition of the subsequent recruitment of TBK1 to the signaling complex. 'Lys-63'-linked ubiquitination mediated by RNF39 promotes the activation of the cGAS-STING pathway. Post-translationally, palmitoylation takes place in the Golgi apparatus and creates a platform for the recruitment of TBK1. As to expression, expressed at higher level in the spleen, lymph node, lung and bone marrow, followed by the small intestine, heart, liver and brain, and to a lesser extent in the stomach and kidney.

The protein localises to the endoplasmic reticulum membrane. Its subcellular location is the cytoplasm. The protein resides in the perinuclear region. It is found in the endoplasmic reticulum-Golgi intermediate compartment membrane. It localises to the golgi apparatus membrane. The protein localises to the cytoplasmic vesicle. Its subcellular location is the autophagosome membrane. The protein resides in the mitochondrion outer membrane. It is found in the cell membrane. The catalysed reaction is H(+)(in) = H(+)(out). In terms of biological role, facilitator of innate immune signaling that acts as a sensor of cytosolic DNA from bacteria and viruses and promotes the production of type I interferon (IFN-alpha and IFN-beta). Innate immune response is triggered in response to non-CpG double-stranded DNA from viruses and bacteria delivered to the cytoplasm. Acts by binding cyclic dinucleotides: recognizes and binds cyclic di-GMP (c-di-GMP), a second messenger produced by bacteria, cyclic UMP-AMP (2',3'-cUAMP), and cyclic GMP-AMP (cGAMP), a messenger produced by CGAS in response to DNA virus in the cytosol. Upon binding to c-di-GMP, cUAMP or cGAMP, STING1 oligomerizes, translocates from the endoplasmic reticulum and is phosphorylated by TBK1 on the pLxIS motif, leading to recruitment and subsequent activation of the transcription factor IRF3 to induce expression of type I interferon and exert a potent anti-viral state. Exhibits 2',3' phosphodiester linkage-specific ligand recognition: can bind both 2'-3' linked cGAMP (2'-3'-cGAMP) and 3'-3' linked cGAMP but is preferentially activated by 2'-3' linked cGAMP. The preference for 2'-3'-cGAMP, compared to other linkage isomers is probably due to the ligand itself, whichs adopts an organized free-ligand conformation that resembles the STING1-bound conformation and pays low energy costs in changing into the active conformation. In addition to promote the production of type I interferons, plays a direct role in autophagy. Following cGAMP-binding, STING1 buds from the endoplasmic reticulum into COPII vesicles, which then form the endoplasmic reticulum-Golgi intermediate compartment (ERGIC). The ERGIC serves as the membrane source for WIPI2 recruitment and LC3 lipidation, leading to formation of autophagosomes that target cytosolic DNA or DNA viruses for degradation by the lysosome. Promotes autophagy by acting as a proton channel that directs proton efflux from the Golgi to facilitate MAP1LC3B/LC3B lipidation. The autophagy- and interferon-inducing activities can be uncoupled and autophagy induction is independent of TBK1 phosphorylation. Autophagy is also triggered upon infection by bacteria: following c-di-GMP-binding, which is produced by live Gram-positive bacteria, promotes reticulophagy. May be involved in translocon function, the translocon possibly being able to influence the induction of type I interferons. May be involved in transduction of apoptotic signals via its association with the major histocompatibility complex class II (MHC-II). The sequence is that of Stimulator of interferon genes protein from Sus scrofa (Pig).